A 183-amino-acid polypeptide reads, in one-letter code: Ly6/PLAUR domain-containing protein 6B (183 aa).

Positions 1-39 (MLYKSSDRPAHKVSMLLLCHALAIAVVQIVIFSESWAFA) are cleaved as a signal peptide. Positions 60 to 151 (FKCFTCENAG…VELPTNHTNA (92 aa)) constitute a UPAR/Ly6 domain. Positions 60 to 154 (FKCFTCENAG…PTNHTNAVFA (95 aa)) are sufficient for inhibiting alpha-7 nAChR currents. 6 disulfide bridges follow: C62/C90, C65/C74, C83/C109, C115/C134, C120/C131, and C135/C140. The GPI-anchor amidated serine moiety is linked to residue S164. Positions 165–183 (SAPTLYLPVLAWVFVLPLL) are cleaved as a propeptide — removed in mature form.

It localises to the cell membrane. Likely acts as a modulator of nicotinic acetylcholine receptors (nAChRs) activity. In vitro acts on nAChRs in a subtype- and stoichiometry-dependent manner. Modulates specifically alpha-3(3):beta-4(2) nAChRs by enhancing the sensitivity to ACh, decreasing ACh-induced maximal current response and increasing the rate of desensitization to ACh; has no effect on alpha-7 homomeric nAChRs; modulates alpha-3(2):alpha-5:beta-4(2) nAChRs in the context of CHRNA5/alpha-5 variant Asn-398 but not its wild-type sequence. However, according to another report in vitro it can weakly inhibits alpha-7 nAChRs. The chain is Ly6/PLAUR domain-containing protein 6B (LYPD6B) from Homo sapiens (Human).